The primary structure comprises 347 residues: NADH-ubiquinone oxidoreductase chain 2 (347 aa).

Helical transmembrane passes span 3-23 (PPIL…VLMS), 25-45 (HWLM…PILM), 59-79 (YFLT…INLM), 96-116 (TMMT…FWVP), 122-142 (VHMS…LLVL), 149-169 (IDPN…GWGG), 178-198 (ILAY…LYNP), 200-220 (MMLL…MLFM), 242-262 (SLIL…GFIP), 274-294 (EMII…YFYM), and 323-343 (MILL…TPLL).

It belongs to the complex I subunit 2 family. In terms of assembly, core subunit of respiratory chain NADH dehydrogenase (Complex I) which is composed of 45 different subunits. Interacts with TMEM242.

It is found in the mitochondrion inner membrane. The catalysed reaction is a ubiquinone + NADH + 5 H(+)(in) = a ubiquinol + NAD(+) + 4 H(+)(out). Functionally, core subunit of the mitochondrial membrane respiratory chain NADH dehydrogenase (Complex I) that is believed to belong to the minimal assembly required for catalysis. Complex I functions in the transfer of electrons from NADH to the respiratory chain. The immediate electron acceptor for the enzyme is believed to be ubiquinone. The polypeptide is NADH-ubiquinone oxidoreductase chain 2 (Suricata suricatta (Meerkat)).